The chain runs to 281 residues: Light-independent protochlorophyllide reductase iron-sulfur ATP-binding protein (281 aa).

ATP contacts are provided by residues 10–15 and Lys39; that span reads GIGKST. Mg(2+) is bound at residue Ser14. [4Fe-4S] cluster contacts are provided by Cys95 and Cys129. 180-181 provides a ligand contact to ATP; that stretch reads NR.

Belongs to the NifH/BchL/ChlL family. Homodimer. Protochlorophyllide reductase is composed of three subunits; ChlL, ChlN and ChlB. Requires [4Fe-4S] cluster as cofactor.

It catalyses the reaction chlorophyllide a + oxidized 2[4Fe-4S]-[ferredoxin] + 2 ADP + 2 phosphate = protochlorophyllide a + reduced 2[4Fe-4S]-[ferredoxin] + 2 ATP + 2 H2O. It participates in porphyrin-containing compound metabolism; chlorophyll biosynthesis (light-independent). Functionally, component of the dark-operative protochlorophyllide reductase (DPOR) that uses Mg-ATP and reduced ferredoxin to reduce ring D of protochlorophyllide (Pchlide) to form chlorophyllide a (Chlide). This reaction is light-independent. The L component serves as a unique electron donor to the NB-component of the complex, and binds Mg-ATP. This Thermosynechococcus vestitus (strain NIES-2133 / IAM M-273 / BP-1) protein is Light-independent protochlorophyllide reductase iron-sulfur ATP-binding protein.